The chain runs to 250 residues: Phosphoribosylaminoimidazole-succinocarboxamide synthase (250 aa).

Belongs to the SAICAR synthetase family.

It catalyses the reaction 5-amino-1-(5-phospho-D-ribosyl)imidazole-4-carboxylate + L-aspartate + ATP = (2S)-2-[5-amino-1-(5-phospho-beta-D-ribosyl)imidazole-4-carboxamido]succinate + ADP + phosphate + 2 H(+). Its pathway is purine metabolism; IMP biosynthesis via de novo pathway; 5-amino-1-(5-phospho-D-ribosyl)imidazole-4-carboxamide from 5-amino-1-(5-phospho-D-ribosyl)imidazole-4-carboxylate: step 1/2. This Synechococcus sp. (strain CC9605) protein is Phosphoribosylaminoimidazole-succinocarboxamide synthase.